Reading from the N-terminus, the 312-residue chain is Ribonuclease HIII (312 aa).

The RNase H type-2 domain maps to 95-311 (FNCIGSDEAG…REKAQKILKP (217 aa)). The a divalent metal cation site is built by Asp-101, Glu-102, and Asp-206.

This sequence belongs to the RNase HII family. RnhC subfamily. Mn(2+) is required as a cofactor. Requires Mg(2+) as cofactor.

It localises to the cytoplasm. It carries out the reaction Endonucleolytic cleavage to 5'-phosphomonoester.. Functionally, endonuclease that specifically degrades the RNA of RNA-DNA hybrids. The chain is Ribonuclease HIII from Staphylococcus aureus (strain Mu3 / ATCC 700698).